Reading from the N-terminus, the 372-residue chain is MASNEDFSITQDLEIPADIVELHDINVEPLPMEDIPTESVQYEDVDGNWIYGGHNHPPLMVLQPLFTNTGYGDHDQEMLMLQTQEEVVGYCDSDNQLGNDLEDQLALPDSIEDEHFQMTLASLSASAASTSTSTQSRSKKPSKKPSGKSATSTEANPAGSSSSLGTRKWEQKQMQVKTLEGEFSVTMWSPNDNNDQGAVGEGQAENPPDYSEYLKGKKLPPGGLPGIDLSDPKQLAEFTKVKPKRSKGEPPKTVPCSYSGCEKMFRDYAAMRKHLHIHGPRVHVCAECGKAFLESSKLRRHQLVHTGEKPFQCTFEGCGKRFSLDFNLRTHLRIHTGDKPFVCPFDVCNRKFAQSTNLKTHILTHVKTKNNP.

The interval 32 to 102 (MEDIPTESVQ…SDNQLGNDLE (71 aa)) is mediates transcriptional activation. Residues 126–136 (SAASTSTSTQS) are compositionally biased toward low complexity. Disordered regions lie at residues 126 to 172 (SAAS…WEQK) and 186 to 210 (TMWS…PPDY). Positions 137-146 (RSKKPSKKPS) are enriched in basic residues. Polar residues-rich tracts occupy residues 154–165 (EANPAGSSSSLG) and 186–196 (TMWSPNDNNDQ). The interval 237 to 372 (EFTKVKPKRS…LTHVKTKNNP (136 aa)) is mediates transcriptional repression. 4 consecutive C2H2-type zinc fingers follow at residues 254-278 (VPCS…LHIH), 283-305 (HVCA…QLVH), 311-335 (FQCT…LRIH), and 341-365 (FVCP…ILTH).

The protein belongs to the YY transcription factor family. In terms of tissue distribution, expressed in kidney, liver, spleen and testis but not in colon.

It is found in the nucleus. Functions as a multifunctional transcription factor that may exhibit positive and negative control on a large number of genes. May antagonize YY1 and function in development and differentiation. The sequence is that of Transcription factor YY2 (YY2) from Homo sapiens (Human).